Consider the following 559-residue polypeptide: Formate--tetrahydrofolate ligase (559 aa).

Position 67–74 (67–74 (TPAGEGKS)) interacts with ATP.

The protein belongs to the formate--tetrahydrofolate ligase family.

The catalysed reaction is (6S)-5,6,7,8-tetrahydrofolate + formate + ATP = (6R)-10-formyltetrahydrofolate + ADP + phosphate. It participates in one-carbon metabolism; tetrahydrofolate interconversion. This chain is Formate--tetrahydrofolate ligase, found in Lactobacillus delbrueckii subsp. bulgaricus (strain ATCC BAA-365 / Lb-18).